The sequence spans 358 residues: Gap junction alpha-5 protein (358 aa).

Residues 1-19 (MGDWSFLGEFLEEVHKHST) are Cytoplasmic-facing. Residues 20 to 40 (VIGKVWLTVLFIFRMLVLGTA) form a helical membrane-spanning segment. Topologically, residues 41–76 (AESSWGDEQADFRCDTIQPGCQNVCYDQAFPISHIR) are extracellular. A helical membrane pass occupies residues 77-97 (YWVLQIIFVSTPSLVYMGHAM). Over 98–164 (HTVRMQEKQK…CTILIRTTME (67 aa)) the chain is Cytoplasmic. The helical transmembrane segment at 165-185 (VAFIVGQYLLYGIFLDTLHVC) threads the bilayer. Topologically, residues 186 to 205 (RRSPCPHPVNCYVSRPTEKN) are extracellular. The chain crosses the membrane as a helical span at residues 206 to 226 (VFIVFMMAVAGLSLFLSLAEL). Residues 227–358 (YHLGWKKIRQ…SKARSDDLSV (132 aa)) lie on the Cytoplasmic side of the membrane. Disordered regions lie at residues 242–262 (RQGVDKHQLPGPPTSLVQSLT) and 318–358 (SQKP…DLSV). Serine 353 and serine 357 each carry phosphoserine.

The protein belongs to the connexin family. Alpha-type (group II) subfamily. A connexon is composed of a hexamer of connexins. As to expression, abundantly expressed in the lung, also expressed in the kidney and heart.

The protein resides in the cell membrane. Its subcellular location is the cell junction. It localises to the gap junction. Functionally, one gap junction consists of a cluster of closely packed pairs of transmembrane channels, the connexons, through which materials of low MW diffuse from one cell to a neighboring cell. The polypeptide is Gap junction alpha-5 protein (Gja5) (Mus musculus (Mouse)).